We begin with the raw amino-acid sequence, 213 residues long: Urease accessory protein UreG (213 aa).

GTP is bound at residue 12–19; sequence GPVGSGKT.

It belongs to the SIMIBI class G3E GTPase family. UreG subfamily. Homodimer. UreD, UreF and UreG form a complex that acts as a GTP-hydrolysis-dependent molecular chaperone, activating the urease apoprotein by helping to assemble the nickel containing metallocenter of UreC. The UreE protein probably delivers the nickel.

It is found in the cytoplasm. Facilitates the functional incorporation of the urease nickel metallocenter. This process requires GTP hydrolysis, probably effectuated by UreG. This Marinomonas sp. (strain MWYL1) protein is Urease accessory protein UreG.